The following is a 131-amino-acid chain: Small ribosomal subunit protein uS8 (131 aa).

Belongs to the universal ribosomal protein uS8 family. Part of the 30S ribosomal subunit. Contacts proteins S5 and S12.

In terms of biological role, one of the primary rRNA binding proteins, it binds directly to 16S rRNA central domain where it helps coordinate assembly of the platform of the 30S subunit. This Campylobacter lari (strain RM2100 / D67 / ATCC BAA-1060) protein is Small ribosomal subunit protein uS8.